We begin with the raw amino-acid sequence, 51 residues long: Insulin (51 aa).

Cystine bridges form between C7–C37, C19–C50, and C36–C41.

This sequence belongs to the insulin family. Heterodimer of a B chain and an A chain linked by two disulfide bonds.

It localises to the secreted. Insulin decreases blood glucose concentration. It increases cell permeability to monosaccharides, amino acids and fatty acids. It accelerates glycolysis, the pentose phosphate cycle, and glycogen synthesis in liver. The protein is Insulin (INS) of Capra hircus (Goat).